Reading from the N-terminus, the 617-residue chain is LEAF RUST 10 DISEASE-RESISTANCE LOCUS RECEPTOR-LIKE PROTEIN KINASE-like 2.4 (617 aa).

Residues 1–26 (MYYLPSSCLVLFLFFSLFYHLPCASS) form the signal peptide. Over 27–243 (KQTLGWCESQ…LPTRLSSEAK (217 aa)) the chain is Extracellular. 5 N-linked (GlcNAc...) asparagine glycosylation sites follow: asparagine 41, asparagine 69, asparagine 86, asparagine 112, and asparagine 184. Residues 244–264 (IATIAGVSLLPFLVLTLVVHI) traverse the membrane as a helical segment. The Cytoplasmic portion of the chain corresponds to 265–617 (IRKQKTSNDK…SEENSISSEI (353 aa)). Positions 307 to 594 (NSFAEVVGRG…ALEVPPRPVL (288 aa)) constitute a Protein kinase domain. Residues 313-321 (VGRGGFGIV) and lysine 335 each bind ATP. The residue at position 380 (tyrosine 380) is a Phosphotyrosine. Aspartate 431 (proton acceptor) is an active-site residue. Residues threonine 468 and threonine 471 each carry the phosphothreonine modification.

Belongs to the protein kinase superfamily. Ser/Thr protein kinase family.

The protein localises to the membrane. It catalyses the reaction L-seryl-[protein] + ATP = O-phospho-L-seryl-[protein] + ADP + H(+). The enzyme catalyses L-threonyl-[protein] + ATP = O-phospho-L-threonyl-[protein] + ADP + H(+). This chain is LEAF RUST 10 DISEASE-RESISTANCE LOCUS RECEPTOR-LIKE PROTEIN KINASE-like 2.4, found in Arabidopsis thaliana (Mouse-ear cress).